A 195-amino-acid chain; its full sequence is MNFAEVLLERKLLLIGSFVLTSGKVSPYYLDLRPLPNYPEFYDIVNQAIKKAKDIPHDIIVGIATGGVPLSAFIACNLKEPMGYIRIEKKGHGTNRTLELDVKGKRVLLVDDVATTGVSIEKATLEILNGGGKVSDALVIIDRQEGASQRLEKLGVKLHSLFKISEILDELLKSDKLKDNEKKSILDYLVKNVEK.

5-phospho-alpha-D-ribose 1-diphosphate is bound by residues Arg86, Lys90, His92, and 111–119 (DDVATTGVS). Orotate-binding residues include Thr115 and Arg143.

This sequence belongs to the purine/pyrimidine phosphoribosyltransferase family. PyrE subfamily. In terms of assembly, homodimer. It depends on Mg(2+) as a cofactor.

The enzyme catalyses orotidine 5'-phosphate + diphosphate = orotate + 5-phospho-alpha-D-ribose 1-diphosphate. It participates in pyrimidine metabolism; UMP biosynthesis via de novo pathway; UMP from orotate: step 1/2. Catalyzes the transfer of a ribosyl phosphate group from 5-phosphoribose 1-diphosphate to orotate, leading to the formation of orotidine monophosphate (OMP). This chain is Orotate phosphoribosyltransferase, found in Saccharolobus solfataricus (strain ATCC 35092 / DSM 1617 / JCM 11322 / P2) (Sulfolobus solfataricus).